The primary structure comprises 621 residues: Putative zinc metalloprotease CPn_0344/CP_0416/CPj0344/CpB0350 (621 aa).

H20 is a Zn(2+) binding site. Residue E21 is part of the active site. H24 is a binding site for Zn(2+). 3 consecutive transmembrane segments (helical) span residues 103-125 (ILVL…SILY), 561-583 (VLNL…WEIV), and 596-613 (ILVP…FLTF).

This sequence belongs to the peptidase M50B family. It depends on Zn(2+) as a cofactor.

It is found in the cell inner membrane. The polypeptide is Putative zinc metalloprotease CPn_0344/CP_0416/CPj0344/CpB0350 (Chlamydia pneumoniae (Chlamydophila pneumoniae)).